A 264-amino-acid chain; its full sequence is Enhancer of mRNA-decapping protein 1 (264 aa).

Disordered stretches follow at residues 1 to 180 and 193 to 264; these read MLAQ…FSTI and YNNP…LRDY. Basic residues predominate over residues 63-74; the sequence is GKKSTSKPKSKS. The segment covering 83 to 92 has biased composition (polar residues); it reads NFKLTASPSL. Pro residues predominate over residues 108 to 118; that stretch reads PSPPPPPPPST. 3 stretches are compositionally biased toward low complexity: residues 119–134, 161–172, and 208–226; these read QPST…RTST, NGKKPNFFNNNN, and NNNN…NSNS. The segment covering 248–264 has biased composition (polar residues); it reads FKSNNGSPRQSSGLRDY.

This sequence belongs to the EDC family.

It is found in the cytoplasm. Its function is as follows. mRNA-binding protein which stimulates mRNA decapping. In Candida albicans (strain SC5314 / ATCC MYA-2876) (Yeast), this protein is Enhancer of mRNA-decapping protein 1 (EDC1).